Here is a 355-residue protein sequence, read N- to C-terminus: Putative [LysW]-L-2-aminoadipate/[LysW]-L-glutamate phosphate reductase (355 aa).

13-16 contacts NADP(+); that stretch reads SGMT. Cys-153 is an active-site residue. Residue Asn-323 coordinates NADP(+).

This sequence belongs to the NAGSA dehydrogenase family. Type 1 subfamily. LysY sub-subfamily.

Its subcellular location is the cytoplasm. It carries out the reaction [amino-group carrier protein]-C-terminal-N-(1-carboxy-5-oxopentan-1-yl)-L-glutamine + phosphate + NADP(+) = [amino-group carrier protein]-C-terminal-N-(1-carboxy-5-phosphooxy-5-oxopentan-1-yl)-L-glutamine + NADPH + H(+). The catalysed reaction is [amino-group carrier protein]-C-terminal-gamma-(L-glutamyl-5-semialdehyde)-L-glutamate + phosphate + NADP(+) = [amino-group carrier protein]-C-terminal-gamma-(5-phospho-L-glutamyl)-L-glutamate + NADPH + H(+). The protein operates within amino-acid biosynthesis; L-lysine biosynthesis via AAA pathway; L-lysine from L-alpha-aminoadipate (Thermus route): step 3/5. Its pathway is amino-acid biosynthesis; L-arginine biosynthesis. Functionally, involved in both the arginine and lysine biosynthetic pathways. The protein is Putative [LysW]-L-2-aminoadipate/[LysW]-L-glutamate phosphate reductase of Aeropyrum pernix (strain ATCC 700893 / DSM 11879 / JCM 9820 / NBRC 100138 / K1).